Consider the following 272-residue polypeptide: 5'-nucleotidase SurE (272 aa).

Residues Asp28, Asp29, Ser59, and Asn115 each coordinate a divalent metal cation.

This sequence belongs to the SurE nucleotidase family. It depends on a divalent metal cation as a cofactor.

The protein localises to the cytoplasm. The catalysed reaction is a ribonucleoside 5'-phosphate + H2O = a ribonucleoside + phosphate. Nucleotidase that shows phosphatase activity on nucleoside 5'-monophosphates. This Chlorobium chlorochromatii (strain CaD3) protein is 5'-nucleotidase SurE.